The sequence spans 72 residues: Large ribosomal subunit protein eL40 (72 aa).

This sequence belongs to the eukaryotic ribosomal protein eL40 family.

This chain is Large ribosomal subunit protein eL40, found in Nicotiana tabacum (Common tobacco).